Here is a 356-residue protein sequence, read N- to C-terminus: Cobalt-precorrin-5B C(1)-methyltransferase (356 aa).

It belongs to the CbiD family.

The enzyme catalyses Co-precorrin-5B + S-adenosyl-L-methionine = Co-precorrin-6A + S-adenosyl-L-homocysteine. It participates in cofactor biosynthesis; adenosylcobalamin biosynthesis; cob(II)yrinate a,c-diamide from sirohydrochlorin (anaerobic route): step 6/10. Functionally, catalyzes the methylation of C-1 in cobalt-precorrin-5B to form cobalt-precorrin-6A. The chain is Cobalt-precorrin-5B C(1)-methyltransferase from Citrifermentans bemidjiense (strain ATCC BAA-1014 / DSM 16622 / JCM 12645 / Bem) (Geobacter bemidjiensis).